A 398-amino-acid polypeptide reads, in one-letter code: Acetate kinase (398 aa).

Asn7 is a Mg(2+) binding site. Lys14 contributes to the ATP binding site. Residue Arg91 coordinates substrate. Residue Asp148 is the Proton donor/acceptor of the active site. ATP contacts are provided by residues 208–212 (HLGNG), 283–285 (DFR), and 331–335 (GLGEN). Glu384 contributes to the Mg(2+) binding site.

Belongs to the acetokinase family. As to quaternary structure, homodimer. Mg(2+) serves as cofactor. The cofactor is Mn(2+).

It localises to the cytoplasm. It catalyses the reaction acetate + ATP = acetyl phosphate + ADP. Its pathway is metabolic intermediate biosynthesis; acetyl-CoA biosynthesis; acetyl-CoA from acetate: step 1/2. Functionally, catalyzes the formation of acetyl phosphate from acetate and ATP. Can also catalyze the reverse reaction. This is Acetate kinase from Natranaerobius thermophilus (strain ATCC BAA-1301 / DSM 18059 / JW/NM-WN-LF).